A 345-amino-acid chain; its full sequence is Nuclear egress protein 1 (345 aa).

A CCCH-type zinc finger spans residues 115–247 (CISLSEMGYT…FVFKPGSPLH (133 aa)).

This sequence belongs to the herpesviridae NEC1 protein family. Forms a heterohexameric complex with NEC2. Interacts with capsid vertex specific component 2/CVC2; this interaction directs the capsid to the host inner nuclear membrane to initiate budding. Post-translationally, phosphorylated at serine residues in the N-terminus. This phosphorylation regulates the localization within the inner nuclear membrane.

The protein resides in the host nucleus inner membrane. Plays an essential role in virion nuclear egress, the first step of virion release from infected cell. Within the host nucleus, NEC1 interacts with the newly formed capsid through the vertexes and directs it to the inner nuclear membrane by associating with NEC2. Induces the budding of the capsid at the inner nuclear membrane as well as its envelopment into the perinuclear space. There, the NEC1/NEC2 complex promotes the fusion of the enveloped capsid with the outer nuclear membrane and the subsequent release of the viral capsid into the cytoplasm where it will reach the secondary budding sites in the host Golgi or trans-Golgi network. The protein is Nuclear egress protein 1 of Psittacid herpesvirus 1 (isolate Amazon parrot/-/97-0001/1997) (PsHV-1).